The sequence spans 288 residues: Diaminopimelate epimerase (288 aa).

Residues Asn-13, Gln-51, and Asn-71 each contribute to the substrate site. The Proton donor role is filled by Cys-80. Residues 81 to 82 (GN), Asn-166, Asn-200, and 218 to 219 (ER) each bind substrate. Residue Cys-227 is the Proton acceptor of the active site. 228 to 229 (GT) contributes to the substrate binding site.

This sequence belongs to the diaminopimelate epimerase family. As to quaternary structure, homodimer.

It is found in the cytoplasm. The catalysed reaction is (2S,6S)-2,6-diaminopimelate = meso-2,6-diaminopimelate. The protein operates within amino-acid biosynthesis; L-lysine biosynthesis via DAP pathway; DL-2,6-diaminopimelate from LL-2,6-diaminopimelate: step 1/1. Catalyzes the stereoinversion of LL-2,6-diaminopimelate (L,L-DAP) to meso-diaminopimelate (meso-DAP), a precursor of L-lysine and an essential component of the bacterial peptidoglycan. In Caulobacter vibrioides (strain ATCC 19089 / CIP 103742 / CB 15) (Caulobacter crescentus), this protein is Diaminopimelate epimerase.